A 757-amino-acid polypeptide reads, in one-letter code: Large ribosomal subunit protein mL102 (rPPR5) (757 aa).

A compositionally biased stretch (polar residues) spans 39-55 (EETQTPANANPETQSPD). The tract at residues 39–82 (EETQTPANANPETQSPDAKSETKKNLTSTETRPLRERFQRGKRQ) is disordered. The span at 70–82 (RPLRERFQRGKRQ) shows a compositional bias: basic and acidic residues. PPR repeat units follow at residues 149–183 (DRDT…GVPW), 184–218 (DEDM…GVER), 219–253 (TIKS…GVEP), 254–288 (TRHT…GISP), 289–323 (DDAT…KIGP), 324–358 (SVVS…GIEP), 359–393 (NATT…HIAP), 395–429 (DNSI…NVPA), 430–464 (EAGH…EIIL), 473–507 (EPSA…GVQD), 510–541 (ALNN…GVPR), 542–576 (ESNA…GHVP), 577–611 (DSSL…NVGI), 614–648 (NMDL…GHTA), 651–680 (DSLL…DLSL), and 681–715 (EFSS…GSST).

It belongs to the PPR family. P subfamily. As to quaternary structure, component of the mitochondrial ribosome large subunit.

It is found in the mitochondrion. The polypeptide is Large ribosomal subunit protein mL102 (rPPR5) (Arabidopsis thaliana (Mouse-ear cress)).